We begin with the raw amino-acid sequence, 327 residues long: Glycerol-3-phosphate acyltransferase (327 aa).

Helical transmembrane passes span 3–23 (SLLW…LLFA), 52–72 (VGVL…AVAL), 78–98 (TVFH…SCFL), 112–132 (VFLP…LAVI), and 152–172 (MLLL…MVLV). Disordered regions lie at residues 184 to 212 (SRGE…EAAA) and 233 to 327 (PSTE…SSGQ). The span at 199 to 212 (AQGTDAGAAPEAAA) shows a compositional bias: low complexity. Over residues 237–246 (AAPSQETSDA) the composition is skewed to polar residues. Positions 259–271 (EGDKRENEEHDNA) are enriched in basic and acidic residues.

The protein belongs to the PlsY family. As to quaternary structure, probably interacts with PlsX.

The protein localises to the cell inner membrane. It carries out the reaction an acyl phosphate + sn-glycerol 3-phosphate = a 1-acyl-sn-glycero-3-phosphate + phosphate. Its pathway is lipid metabolism; phospholipid metabolism. Functionally, catalyzes the transfer of an acyl group from acyl-phosphate (acyl-PO(4)) to glycerol-3-phosphate (G3P) to form lysophosphatidic acid (LPA). This enzyme utilizes acyl-phosphate as fatty acyl donor, but not acyl-CoA or acyl-ACP. The protein is Glycerol-3-phosphate acyltransferase of Nitratidesulfovibrio vulgaris (strain ATCC 29579 / DSM 644 / CCUG 34227 / NCIMB 8303 / VKM B-1760 / Hildenborough) (Desulfovibrio vulgaris).